Reading from the N-terminus, the 289-residue chain is Bifunctional protein FolD (289 aa).

NADP(+) contacts are provided by residues 165–167 (GAS) and Ser-190.

This sequence belongs to the tetrahydrofolate dehydrogenase/cyclohydrolase family. In terms of assembly, homodimer.

The catalysed reaction is (6R)-5,10-methylene-5,6,7,8-tetrahydrofolate + NADP(+) = (6R)-5,10-methenyltetrahydrofolate + NADPH. The enzyme catalyses (6R)-5,10-methenyltetrahydrofolate + H2O = (6R)-10-formyltetrahydrofolate + H(+). Its pathway is one-carbon metabolism; tetrahydrofolate interconversion. Catalyzes the oxidation of 5,10-methylenetetrahydrofolate to 5,10-methenyltetrahydrofolate and then the hydrolysis of 5,10-methenyltetrahydrofolate to 10-formyltetrahydrofolate. The protein is Bifunctional protein FolD of Ralstonia nicotianae (strain ATCC BAA-1114 / GMI1000) (Ralstonia solanacearum).